The primary structure comprises 221 residues: Serine/arginine-rich splicing factor 2 (221 aa).

Position 2 is an N-acetylserine (Ser2). Ser2 carries the post-translational modification Phosphoserine. The region spanning 14-92 is the RRM domain; it reads TSLKVDNLTY…RELRVQMARY (79 aa). 2 positions are modified to phosphothreonine: Thr22 and Thr25. Ser26 is modified (phosphoserine). An N6-acetyllysine modification is found at Lys52. Positions 92-221 are disordered; the sequence is YGRPPDSHHS…SPEEEGAVSS (130 aa). Basic residues-rich tracts occupy residues 117–171 and 179–189; these read RRSR…RSKS and SRSRSRSRSRS. Residues Ser189, Ser191, Ser204, Ser206, Ser208, Ser212, and Ser220 each carry the phosphoserine modification. A compositionally biased stretch (acidic residues) spans 212–221; the sequence is SPEEEGAVSS.

This sequence belongs to the splicing factor SR family. As to quaternary structure, in vitro, self-associates and binds SRSF1/SFRS1 (ASF/SF2), SNRP70 and U2AF1 but not U2AF2. Binds SREK1/SFRS12. Interacts with CCNL1 and CCNL2. Interacts with SCAF11. Interacts with ZRSR2/U2AF1-RS2. Interacts with CCDC55 (via C-terminus). Interacts with BRDT. In terms of processing, extensively phosphorylated on serine residues in the RS domain. Phosphorylated by SRPK2 and this causes its redistribution from the nuclear speckle to nucleoplasm and controls cell fate decision in response to cisplatin treatment. KAT5/TIP60 inhibits its phosphorylation by preventing SRPK2 nuclear translocation. Post-translationally, acetylation on Lys-52 by KAT5/TIP60 promotes its proteasomal degradation. This effect is counterbalanced by HDAC6, which positively controls SRSF2 protein level by deacetylating it and preventing its proteasomal degradation.

Its subcellular location is the nucleus. The protein localises to the nucleoplasm. It is found in the nucleus speckle. Functionally, necessary for the splicing of pre-mRNA. It is required for formation of the earliest ATP-dependent splicing complex and interacts with spliceosomal components bound to both the 5'- and 3'-splice sites during spliceosome assembly. It also is required for ATP-dependent interactions of both U1 and U2 snRNPs with pre-mRNA. Interacts with other spliceosomal components, via the RS domains, to form a bridge between the 5'- and 3'-splice site binding components, U1 snRNP and U2AF. Binds to purine-rich RNA sequences, either 5'-AGSAGAGTA-3' (S=C or G) or 5'-GTTCGAGTA-3'. Can bind to beta-globin mRNA and commit it to the splicing pathway. The phosphorylated form (by SRPK2) is required for cellular apoptosis in response to cisplatin treatment. This is Serine/arginine-rich splicing factor 2 (SRSF2) from Pan troglodytes (Chimpanzee).